Here is a 243-residue protein sequence, read N- to C-terminus: tRNA pseudouridine synthase A (243 aa).

Residue Asp-53 is the Nucleophile of the active site. A substrate-binding site is contributed by Tyr-111.

This sequence belongs to the tRNA pseudouridine synthase TruA family. In terms of assembly, homodimer.

It carries out the reaction uridine(38/39/40) in tRNA = pseudouridine(38/39/40) in tRNA. Formation of pseudouridine at positions 38, 39 and 40 in the anticodon stem and loop of transfer RNAs. This Chlorobium limicola (strain DSM 245 / NBRC 103803 / 6330) protein is tRNA pseudouridine synthase A.